We begin with the raw amino-acid sequence, 197 residues long: RIP-like protein (197 aa).

Residues 1–20 are disordered; that stretch reads MNSTQSPVYRTSVEQKRHAQ. The RIP-type zinc-finger motif lies at 122–191; it reads CPVCQIKNLR…GQLYDMCGSC (70 aa).

In Drosophila melanogaster (Fruit fly), this protein is RIP-like protein (Ripalpha).